Here is a 334-residue protein sequence, read N- to C-terminus: Cytoskeleton protein RodZ (334 aa).

Over 1 to 111 (MNTEATHDQN…LGKRRKKRDG (111 aa)) the chain is Cytoplasmic. Positions 19–71 (LRNAREQLGLSQQAVAERLCLKVSTVRDIEEDKAPSDLASTFLRGYIRSYARL) constitute an HTH cro/C1-type domain. Residues 30–49 (QQAVAERLCLKVSTVRDIEE) constitute a DNA-binding region (H-T-H motif). The helical; Signal-anchor for type II membrane protein transmembrane segment at 112-132 (WLMSFTWLVLFVVVGLTGAWW) threads the bilayer. At 133 to 334 (WQNHKAQQEE…TLNAEPTPAQ (202 aa)) the chain is on the periplasmic side. The disordered stretch occupies residues 154-241 (LNADKDSGQS…PSALPTSQAG (88 aa)). Composition is skewed to low complexity over residues 176–211 (TTPA…TVVA) and 219–241 (TAAT…SQAG).

The protein belongs to the RodZ family.

It is found in the cell inner membrane. Cytoskeletal protein that is involved in cell-shape control through regulation of the length of the long axis. This chain is Cytoskeleton protein RodZ, found in Salmonella choleraesuis (strain SC-B67).